The primary structure comprises 120 residues: Nitrogen regulatory protein GlnK1 (120 aa).

Residues Thr40, 48 to 50 (GEQ), Val75, and 98 to 101 (GDGR) contribute to the ADP site. ATP is bound by residues Thr40, 48–50 (GEQ), Val75, and 98–101 (GDGR).

This sequence belongs to the P(II) protein family. In terms of assembly, homotrimer. Interacts and forms a complex with Amt1.

It is found in the cytoplasm. In terms of biological role, involved in the regulation of nitrogen metabolism. Regulates the activity of its targets by protein-protein interaction in response to the nitrogen status of the cell. Regulates the activity of the ammonia channel Amt1 via direct interaction. The sequence is that of Nitrogen regulatory protein GlnK1 from Archaeoglobus fulgidus (strain ATCC 49558 / DSM 4304 / JCM 9628 / NBRC 100126 / VC-16).